Here is a 61-residue protein sequence, read N- to C-terminus: MAKLRITQIRSGIGGTHNQRATLRTLGLRKINATTVRDDRPEVRGMIRTVTHLVRVEEVDS.

The protein belongs to the universal ribosomal protein uL30 family. Part of the 50S ribosomal subunit.

The sequence is that of Large ribosomal subunit protein uL30 from Frankia alni (strain DSM 45986 / CECT 9034 / ACN14a).